A 506-amino-acid chain; its full sequence is Lysine--tRNA ligase (506 aa).

The Mg(2+) site is built by Glu415 and Glu422.

The protein belongs to the class-II aminoacyl-tRNA synthetase family. Homodimer. Mg(2+) is required as a cofactor.

The protein resides in the cytoplasm. The enzyme catalyses tRNA(Lys) + L-lysine + ATP = L-lysyl-tRNA(Lys) + AMP + diphosphate. This chain is Lysine--tRNA ligase, found in Erwinia tasmaniensis (strain DSM 17950 / CFBP 7177 / CIP 109463 / NCPPB 4357 / Et1/99).